The chain runs to 410 residues: MKVYLVGGAVRDRLLGIPVQEQDWVVVGATPEELLKRKYRQVGRDFPVFLHPETKEEYALARTERKSAPGYYGFICDFSESVTLEEDLARRDLTINAMAMDEQGNLIDPYQGQRDLEEKLLRHVSSAFVEDPVRVLRVARFASRFHHLGFRIANETRLLMYSMVKQGELAHLIPERVWQEWQKSLEEKNPEQFILSLRSCDALRVILPEINSLFGVPNPHQYHQEIDTGIHSLMTLRASSELSEEPLVRFAALVHDLGKASTPIQAWPKHHGHEEEGTKLIRALCARLRIPNDYRDLAVTVARAHLNIHRLCELRPNTIVKLLEQVDAFRRPQLFHKILIACQADAESCGKTVVYRQTQLWNEILSECVKVTPQTFIVQGYEGKAIKEAMHQSRVACVERIMTSWKSNEK.

The ATP site is built by glycine 8 and arginine 11. Residues glycine 8 and arginine 11 each contribute to the CTP site. Residues glutamate 21 and aspartate 23 each contribute to the Mg(2+) site. Positions 91, 137, and 140 each coordinate ATP. CTP is bound by residues arginine 91, arginine 137, and arginine 140. An HD domain is found at 228–329; that stretch reads TGIHSLMTLR…VKLLEQVDAF (102 aa).

The protein belongs to the tRNA nucleotidyltransferase/poly(A) polymerase family. Bacterial CCA-adding enzyme type 1 subfamily. As to quaternary structure, monomer. Can also form homodimers and oligomers. Requires Mg(2+) as cofactor. The cofactor is Ni(2+).

It carries out the reaction a tRNA precursor + 2 CTP + ATP = a tRNA with a 3' CCA end + 3 diphosphate. The enzyme catalyses a tRNA with a 3' CCA end + 2 CTP + ATP = a tRNA with a 3' CCACCA end + 3 diphosphate. Catalyzes the addition and repair of the essential 3'-terminal CCA sequence in tRNAs without using a nucleic acid template. Adds these three nucleotides in the order of C, C, and A to the tRNA nucleotide-73, using CTP and ATP as substrates and producing inorganic pyrophosphate. tRNA 3'-terminal CCA addition is required both for tRNA processing and repair. Also involved in tRNA surveillance by mediating tandem CCA addition to generate a CCACCA at the 3' terminus of unstable tRNAs. While stable tRNAs receive only 3'-terminal CCA, unstable tRNAs are marked with CCACCA and rapidly degraded. The protein is Multifunctional CCA protein of Legionella pneumophila subsp. pneumophila (strain Philadelphia 1 / ATCC 33152 / DSM 7513).